Here is a 433-residue protein sequence, read N- to C-terminus: GTPase Obg (433 aa).

The 159-residue stretch at 4–162 folds into the Obg domain; sequence EDFVDRVTIF…RWLELELKLL (159 aa). The 172-residue stretch at 163–334 folds into the OBG-type G domain; the sequence is ADAGLIGFPN…LKQKIFEIVG (172 aa). GTP contacts are provided by residues 169–176, 194–198, 216–219, 286–289, and 315–317; these read GFPNVGKS, FTTLV, DIPG, NKID, and SAL. The Mg(2+) site is built by serine 176 and threonine 196. One can recognise an OCT domain in the interval 356-433; that stretch reads TKIEERFDFE…IGQYSFEYKE (78 aa).

The protein belongs to the TRAFAC class OBG-HflX-like GTPase superfamily. OBG GTPase family. In terms of assembly, monomer. Mg(2+) serves as cofactor.

Its subcellular location is the cytoplasm. In terms of biological role, an essential GTPase which binds GTP, GDP and possibly (p)ppGpp with moderate affinity, with high nucleotide exchange rates and a fairly low GTP hydrolysis rate. Plays a role in control of the cell cycle, stress response, ribosome biogenesis and in those bacteria that undergo differentiation, in morphogenesis control. The protein is GTPase Obg of Pseudothermotoga lettingae (strain ATCC BAA-301 / DSM 14385 / NBRC 107922 / TMO) (Thermotoga lettingae).